A 3856-amino-acid polypeptide reads, in one-letter code: Serine/threonine-protein kinase ATM (3856 aa).

A PWWP domain is found at 108 to 162 (VGNLVWVMTKYKKWWPGEVVDFKADAKESFMVRSIGQSHLVSWFASSKLKPFKES). The segment at 648 to 681 (GIPDLNGTNTEPTLVLPQVEPTQRRRRRKKEESP) is disordered. The FAT domain maps to 2727-3393 (VVAGSAVVCG…ILQLLALANG (667 aa)). The Bipartite nuclear localization signal signature appears at 3233 to 3249 (RKHKTKELEVFIKRFKS). The 313-residue stretch at 3499-3811 (LSDSVTVMNG…GNKDATRALM (313 aa)) folds into the PI3K/PI4K catalytic domain. The interval 3505 to 3511 (VMNGINA) is G-loop. Residues 3678–3686 (GLGDRHAMN) are catalytic loop. The segment at 3698–3722 (HIDLGVAFEQGLMLKTPERVPFRLT) is activation loop. The FATC domain maps to 3824–3856 (EMRSIHGQAQQLIQDAIDTDRLSHMFPGWGAWM).

It belongs to the PI3/PI4-kinase family. In terms of assembly, interacts with RUG3. As to expression, ubiquitously expressed at low levels with slightly higher levels in flower buds.

It is found in the nucleus. The enzyme catalyses L-seryl-[protein] + ATP = O-phospho-L-seryl-[protein] + ADP + H(+). The catalysed reaction is L-threonyl-[protein] + ATP = O-phospho-L-threonyl-[protein] + ADP + H(+). Serine/threonine protein kinase which activates checkpoint signaling upon genotoxic stresses such as ionizing radiation (IR) or DNA replication stalling. Plays a central role in the perception and response to both stress-induced damage in somatic cells and developmentally programmed DNA damage during meiosis. Recognizes the substrate consensus sequence [ST]-Q. Phosphorylates histone variant H2AX to form H2AXS139ph at double strand breaks (DSBs), thereby regulating DNA damage response mechanism. Involved in transcriptional regulation of RAD51, PARP1, GR1, and LIG4 in response to DNA double strand breaks. Plays a dual role by activating the DNA damage response at dysfunctional telomeres and yet preventing this activation at functional telomeres. Not required for telomere length homeostasis. Regulates DNA damage response (DDR) synergistically with RUG3. Together with RUG3, involved in the splicing of the ND2/NAD2 mRNA. The chain is Serine/threonine-protein kinase ATM from Arabidopsis thaliana (Mouse-ear cress).